Here is a 550-residue protein sequence, read N- to C-terminus: MAAPASSHGPSEDSGCLQERKIAAEMMLVDCLTDDQELVSFEDVIVDFTQEEWSSLNPDQRNLYRDVMLENYQNLATVGYQLIKPSLISWLEQEEFSKGQKIVFPEWKLQLETKCSAFQQEFLRGNISSRMQMQTGINRGRELCDGTQYGDFFSELSPLRTDMKTQPAQDNYGCSQYRKDFLMLQRKNCAGEKLSEFSQSEETGMTPVKEKIDTQEKGFECSDCGKSFMSQSHLQTHQRTHSGDKLYEWNECGRSFINSRLAVLIETLNAKKPHRCKECGKGYRYPAYLNIHMRTHTGEKPYECKECGKAFNYSNSFQIHGRTHTGEKPYVCSQCGKAFTQHSGLSIHVRSHTGDKPYGCKECGKAFLTSSRLIQHIRTHTGEKPFVCVKCGKAFAISSNLNGHLKLHAEEKTCECKICGKAFGYLSCLNNHMRTHNAKKSYTCKECGKAFNYSTHLKIHMRIHTGEKPYECKQCGKAFSHSTSFQIHERTHTGEKPYECKECGKAFICPSSFRIHEISHTHTEEKPYKCQQCGKAYSHPRSLRRHERIH.

In terms of domain architecture, KRAB spans 39–110; sequence VSFEDVIVDF…KIVFPEWKLQ (72 aa). C2H2-type zinc fingers lie at residues 219-241, 274-296, 302-324, 330-352, 358-380, 386-408, 414-436, 442-464, 470-492, 498-522, and 528-550; these read FECS…QRTH, HRCK…MRTH, YECK…GRTH, YVCS…VRSH, YGCK…IRTH, FVCV…LKLH, CECK…MRTH, YTCK…MRIH, YECK…ERTH, YECK…SHTH, and YKCQ…ERIH.

It is found in the nucleus. Its function is as follows. May be involved in transcriptional regulation. This Mus musculus (Mouse) protein is Zinc finger protein 426 (Znf426).